Here is a 208-residue protein sequence, read N- to C-terminus: Outer-membrane lipoprotein carrier protein (208 aa).

The signal sequence occupies residues 1-22 (MKKRLCAVLLASPLLFSAAVFA).

It belongs to the LolA family. In terms of assembly, monomer.

The protein resides in the periplasm. Functionally, participates in the translocation of lipoproteins from the inner membrane to the outer membrane. Only forms a complex with a lipoprotein if the residue after the N-terminal Cys is not an aspartate (The Asp acts as a targeting signal to indicate that the lipoprotein should stay in the inner membrane). The polypeptide is Outer-membrane lipoprotein carrier protein (Shewanella baltica (strain OS223)).